The following is a 132-amino-acid chain: Small ribosomal subunit protein uS11 (132 aa).

The tract at residues 113 to 132 (VTPIPHDGTRAPGGKRGRRV) is disordered.

It belongs to the universal ribosomal protein uS11 family. As to quaternary structure, part of the 30S ribosomal subunit.

Functionally, located on the platform of the 30S subunit. This is Small ribosomal subunit protein uS11 from Methanocella arvoryzae (strain DSM 22066 / NBRC 105507 / MRE50).